Here is a 302-residue protein sequence, read N- to C-terminus: Cyclin-C (302 aa).

Positions 46–152 constitute a Cyclin N-terminal domain; sequence NFITAVATEG…VYDSEFILVE (107 aa). The disordered stretch occupies residues 281–302; it reads LPKPNQQPPPQQQHQHQQGYHL. The segment covering 292 to 302 has biased composition (low complexity); it reads QQHQHQQGYHL.

It belongs to the cyclin family. Cyclin C subfamily. In terms of assembly, component of the Mediator complex.

It is found in the nucleus. Its function is as follows. Component of the Mediator complex, a coactivator involved in regulated gene transcription of nearly all RNA polymerase II-dependent genes. Mediator functions as a bridge to convey information from gene-specific regulatory proteins to the basal RNA polymerase II transcription machinery. Mediator is recruited to promoters by direct interactions with regulatory proteins and serves as a scaffold for the assembly of a functional preinitiation complex with RNA polymerase II and the general transcription factors. Binds to and activates cyclin-dependent kinase cdk-8 that phosphorylates the CTD (C-terminal domain) of the large subunit of RNA polymerase II (RNAp II), which may inhibit the formation of a transcription initiation complex. The protein is Cyclin-C (cic-1) of Caenorhabditis elegans.